The chain runs to 522 residues: Na(+)/H(+) antiporter NhaB (522 aa).

The next 9 helical transmembrane spans lie at 13 to 33, 98 to 118, 140 to 160, 239 to 259, 304 to 324, 356 to 376, 390 to 410, 446 to 466, and 477 to 497; these read FLGN…IINP, LLLV…LFVF, AFLS…SVSV, FFIR…LVCL, AIIG…LVGL, LTVF…TPII, LFYL…VGTV, ATPN…APLI, and ALPY…FLLV.

The protein belongs to the NhaB Na(+)/H(+) (TC 2.A.34) antiporter family.

The protein localises to the cell inner membrane. It catalyses the reaction 2 Na(+)(in) + 3 H(+)(out) = 2 Na(+)(out) + 3 H(+)(in). Na(+)/H(+) antiporter that extrudes sodium in exchange for external protons. This is Na(+)/H(+) antiporter NhaB from Yersinia pestis bv. Antiqua (strain Angola).